Here is a 387-residue protein sequence, read N- to C-terminus: Protein WHAT'S THIS FACTOR 9, mitochondrial (387 aa).

A mitochondrion-targeting transit peptide spans 1-24 (MLSIRRHAKTVASSCTNLTQKRTY). Residues 32–358 (KRDPYFDNIE…KKYIQLMKNS (327 aa)) form the PORR domain.

Its subcellular location is the mitochondrion. Its function is as follows. RNA-binding protein involved in group II intron splicing. Binds specific group II introns and promotes their splicing (e.g. rpl2 and ccmFC). This is Protein WHAT'S THIS FACTOR 9, mitochondrial from Arabidopsis thaliana (Mouse-ear cress).